Reading from the N-terminus, the 274-residue chain is NADPH-dependent 7-cyano-7-deazaguanine reductase (274 aa).

81–83 (IES) is a binding site for substrate. Residue 83–84 (SK) participates in NADPH binding. Catalysis depends on Cys182, which acts as the Thioimide intermediate. Asp189 serves as the catalytic Proton donor. 221-222 (HE) contacts substrate. Residue 250 to 251 (RG) participates in NADPH binding.

Belongs to the GTP cyclohydrolase I family. QueF type 2 subfamily. Homodimer.

The protein localises to the cytoplasm. It carries out the reaction 7-aminomethyl-7-carbaguanine + 2 NADP(+) = 7-cyano-7-deazaguanine + 2 NADPH + 3 H(+). The protein operates within tRNA modification; tRNA-queuosine biosynthesis. Functionally, catalyzes the NADPH-dependent reduction of 7-cyano-7-deazaguanine (preQ0) to 7-aminomethyl-7-deazaguanine (preQ1). In Hahella chejuensis (strain KCTC 2396), this protein is NADPH-dependent 7-cyano-7-deazaguanine reductase.